The chain runs to 327 residues: Phenylalanine--tRNA ligase alpha subunit (327 aa).

Glutamate 252 serves as a coordination point for Mg(2+).

It belongs to the class-II aminoacyl-tRNA synthetase family. Phe-tRNA synthetase alpha subunit type 1 subfamily. Tetramer of two alpha and two beta subunits. Mg(2+) is required as a cofactor.

The protein localises to the cytoplasm. It catalyses the reaction tRNA(Phe) + L-phenylalanine + ATP = L-phenylalanyl-tRNA(Phe) + AMP + diphosphate + H(+). The sequence is that of Phenylalanine--tRNA ligase alpha subunit from Serratia proteamaculans (strain 568).